Consider the following 81-residue polypeptide: Putative defensin-like protein 188 (81 aa).

An N-terminal signal peptide occupies residues 1–19; sequence MKNSSLLFILIVVFVISSS. Disulfide bonds link cysteine 31-cysteine 81, cysteine 37-cysteine 57, cysteine 43-cysteine 75, and cysteine 47-cysteine 77.

This sequence belongs to the DEFL family.

It is found in the secreted. This is Putative defensin-like protein 188 (LCR41) from Arabidopsis thaliana (Mouse-ear cress).